The chain runs to 378 residues: Alanine racemase (378 aa).

Lys-40 acts as the Proton acceptor; specific for D-alanine in catalysis. N6-(pyridoxal phosphate)lysine is present on Lys-40. Arg-140 serves as a coordination point for substrate. Tyr-270 serves as the catalytic Proton acceptor; specific for L-alanine. Residue Met-317 participates in substrate binding.

It belongs to the alanine racemase family. The cofactor is pyridoxal 5'-phosphate.

It catalyses the reaction L-alanine = D-alanine. Its pathway is amino-acid biosynthesis; D-alanine biosynthesis; D-alanine from L-alanine: step 1/1. In terms of biological role, catalyzes the interconversion of L-alanine and D-alanine. May also act on other amino acids. This chain is Alanine racemase (alr), found in Lacticaseibacillus paracasei (strain ATCC 334 / BCRC 17002 / CCUG 31169 / CIP 107868 / KCTC 3260 / NRRL B-441) (Lactobacillus paracasei).